The sequence spans 334 residues: Hemin transport system permease protein HmuU (334 aa).

9 consecutive transmembrane segments (helical) span residues 9–29 (LMLG…ANMG), 60–80 (LLAV…QGLF), 96–116 (AALC…LLAL), 117–137 (YSHM…IFTL), 149–169 (LLAG…LTYI), 191–211 (WSTL…GLLQ), 244–264 (AILI…GLVV), 278–298 (WLLP…DTLA), and 306–326 (EMPV…WLIL).

Belongs to the binding-protein-dependent transport system permease family. FecCD subfamily.

It localises to the cell inner membrane. Part of the binding-protein-dependent transport system for hemin; probably responsible for the translocation of the substrate across the membrane. In Yersinia pestis, this protein is Hemin transport system permease protein HmuU (hmuU).